Consider the following 523-residue polypeptide: Xanthotoxin 5-hydroxylase CYP82C2 (523 aa).

The helical transmembrane segment at 1–21 (MDTSLFSLFVPILVFVFIALF) threads the bilayer. C462 contributes to the heme binding site.

This sequence belongs to the cytochrome P450 family. The cofactor is heme.

The protein localises to the membrane. The catalysed reaction is xanthotoxin + reduced [NADPH--hemoprotein reductase] + O2 = 5-hydroxyxanthotoxin + oxidized [NADPH--hemoprotein reductase] + H2O + 2 H(+). It carries out the reaction indole-3-carbonyl nitrile + reduced [NADPH--hemoprotein reductase] + O2 = 4-hydroxy-indole-3-carbonyl nitrile + oxidized [NADPH--hemoprotein reductase] + H2O + H(+). Its function is as follows. Involved in the biosynthetic pathway to 4-hydroxyindole-3-carbonyl nitrile (4-OH-ICN), a cyanogenic metabolite required for inducible pathogen defense. Converts indole-3-carbonyl nitrile (ICN) into 4-OH-ICN. Can hydroxylate xanthotoxin (8-methoxypsoralen) to form 5-hydroxyxanthotoxin (5-hydroxy-8-methoxypsoralen) in vivo and in vitro. This Arabidopsis thaliana (Mouse-ear cress) protein is Xanthotoxin 5-hydroxylase CYP82C2.